Reading from the N-terminus, the 362-residue chain is 3-dehydroquinate synthase (362 aa).

NAD(+)-binding positions include 70-75 (DGEQYK), 104-108 (GVIGD), 128-129 (TT), K141, and K150. Residues E183, H246, and H263 each contribute to the Zn(2+) site.

Belongs to the sugar phosphate cyclases superfamily. Dehydroquinate synthase family. Requires NAD(+) as cofactor. The cofactor is Co(2+). Zn(2+) is required as a cofactor.

It is found in the cytoplasm. The catalysed reaction is 7-phospho-2-dehydro-3-deoxy-D-arabino-heptonate = 3-dehydroquinate + phosphate. It functions in the pathway metabolic intermediate biosynthesis; chorismate biosynthesis; chorismate from D-erythrose 4-phosphate and phosphoenolpyruvate: step 2/7. Functionally, catalyzes the conversion of 3-deoxy-D-arabino-heptulosonate 7-phosphate (DAHP) to dehydroquinate (DHQ). In Pasteurella multocida (strain Pm70), this protein is 3-dehydroquinate synthase.